We begin with the raw amino-acid sequence, 322 residues long: Coelomocyte uptake defective protein 15 (322 aa).

The first 20 residues, methionine 1–serine 20, serve as a signal peptide directing secretion. 7 N-linked (GlcNAc...) asparagine glycosylation sites follow: asparagine 62, asparagine 98, asparagine 144, asparagine 170, asparagine 180, asparagine 183, and asparagine 222. Residues leucine 244–alanine 264 form a helical membrane-spanning segment.

Belongs to the OSTM1 family.

The protein resides in the membrane. Modulates the transport of substances from the endosomal to lysosomal compartments. Plays a role in lysosome formation and function in coelomocytes. This is Coelomocyte uptake defective protein 15 from Caenorhabditis elegans.